We begin with the raw amino-acid sequence, 741 residues long: uncharacterized protein (741 aa).

Over residues 1-17 the composition is skewed to polar residues; sequence MDSNTNENNSHASSNER. Residues 1–50 form a disordered region; sequence MDSNTNENNSHASSNERQSSEGHDDYLNRNPNSEATEGEEGTHPTTGTQP. Residues 18–27 are compositionally biased toward basic and acidic residues; it reads QSSEGHDDYL. The RING-type 1; degenerate zinc-finger motif lies at 107-150; it reads CPICYDDMNENDEKQATKMPCGHIFGKNCLQKWLENHCTCPLCR. Polar residues-rich tracts occupy residues 177–193, 252–263, and 277–302; these read GNQGNTAVSQENASNGV, PDSNTSTPTTRS, and NASSRQETTPSDSRPSTLTSLFNAFF. Disordered stretches follow at residues 177 to 214, 238 to 387, 500 to 543, 561 to 619, 638 to 688, and 713 to 741; these read GNQGNTAVSQENASNGVHSDFHPSEELNNANTDGRTGV, SATN…NTNR, QPAV…PGIT, ENRM…TPTH, STPS…PQCQ, and RCQQSTSNSENQMDEEIGECPKCRNEEHK. Low complexity predominate over residues 316-332; that stretch reads TSNLTSNSGSMTNSTST. Polar residues-rich tracts occupy residues 333–344 and 357–386; these read DLPTSNLPSQNA and PPNLLNLPTASPESTSWLPGSQTNIPANTN. 3 stretches are compositionally biased toward polar residues: residues 563–586, 604–619, and 652–661; these read RMNQTRSESSTPAQQSAAGSSINV, ENSSEVAGSRNQTPTH, and SKVSSGTSTP. An RING-type 2; degenerate zinc finger spans residues 687–736; that stretch reads CQLEDQGICDPNDRFVHFECGHSVHERCQQSTSNSENQMDEEIGECPKCR. Residues 731–741 show a composition bias toward basic and acidic residues; sequence ECPKCRNEEHK.

It localises to the nucleus. This is an uncharacterized protein from Schizosaccharomyces pombe (strain 972 / ATCC 24843) (Fission yeast).